The primary structure comprises 227 residues: Lipoprotein-releasing system ATP-binding protein LolD (227 aa).

An ABC transporter domain is found at 7–227; that stretch reads LRLERIGRAY…TLKDGRVVDL (221 aa). 43–50 contributes to the ATP binding site; the sequence is APSGAGKS.

This sequence belongs to the ABC transporter superfamily. Lipoprotein translocase (TC 3.A.1.125) family. In terms of assembly, the complex is composed of two ATP-binding proteins (LolD) and two transmembrane proteins (LolC and LolE).

The protein localises to the cell inner membrane. Functionally, part of the ABC transporter complex LolCDE involved in the translocation of mature outer membrane-directed lipoproteins, from the inner membrane to the periplasmic chaperone, LolA. Responsible for the formation of the LolA-lipoprotein complex in an ATP-dependent manner. In Brucella abortus biovar 1 (strain 9-941), this protein is Lipoprotein-releasing system ATP-binding protein LolD.